Here is a 1241-residue protein sequence, read N- to C-terminus: ATP-dependent helicase/nuclease subunit A (1241 aa).

Positions serine 12–arginine 485 constitute a UvrD-like helicase ATP-binding domain. Alanine 33–threonine 40 contacts ATP. In terms of domain architecture, UvrD-like helicase C-terminal spans glycine 505–glycine 805.

It belongs to the helicase family. AddA subfamily. Heterodimer of AddA and AddB/RexB. Mg(2+) is required as a cofactor.

The enzyme catalyses Couples ATP hydrolysis with the unwinding of duplex DNA by translocating in the 3'-5' direction.. The catalysed reaction is ATP + H2O = ADP + phosphate + H(+). Functionally, the heterodimer acts as both an ATP-dependent DNA helicase and an ATP-dependent, dual-direction single-stranded exonuclease. Recognizes the chi site generating a DNA molecule suitable for the initiation of homologous recombination. The AddA nuclease domain is required for chi fragment generation; this subunit has the helicase and 3' -&gt; 5' nuclease activities. This chain is ATP-dependent helicase/nuclease subunit A, found in Bacillus thuringiensis (strain Al Hakam).